A 409-amino-acid polypeptide reads, in one-letter code: 1-deoxy-D-xylulose 5-phosphate reductoisomerase (409 aa).

Residues T5, G6, S7, I8, G31, N33, and N122 each coordinate NADPH. Residue K123 participates in 1-deoxy-D-xylulose 5-phosphate binding. Residue E124 participates in NADPH binding. D148 is a Mn(2+) binding site. 1-deoxy-D-xylulose 5-phosphate is bound by residues S149, E150, S186, and H209. E150 provides a ligand contact to Mn(2+). An NADPH-binding site is contributed by G215. 1-deoxy-D-xylulose 5-phosphate contacts are provided by S222, N227, K228, and E231. Mn(2+) is bound at residue E231.

This sequence belongs to the DXR family. It depends on Mg(2+) as a cofactor. The cofactor is Mn(2+).

It catalyses the reaction 2-C-methyl-D-erythritol 4-phosphate + NADP(+) = 1-deoxy-D-xylulose 5-phosphate + NADPH + H(+). The protein operates within isoprenoid biosynthesis; isopentenyl diphosphate biosynthesis via DXP pathway; isopentenyl diphosphate from 1-deoxy-D-xylulose 5-phosphate: step 1/6. Its function is as follows. Catalyzes the NADPH-dependent rearrangement and reduction of 1-deoxy-D-xylulose-5-phosphate (DXP) to 2-C-methyl-D-erythritol 4-phosphate (MEP). This Parasynechococcus marenigrum (strain WH8102) protein is 1-deoxy-D-xylulose 5-phosphate reductoisomerase.